We begin with the raw amino-acid sequence, 112 residues long: Signal peptidase complex-like protein DTM1 (112 aa).

The N-terminal stretch at 1-25 is a signal peptide; sequence MGRDEMLRRSLVALAAAVVVTGVVT. Transmembrane regions (helical) follow at residues 33–53 and 92–112; these read ATYG…WEFF and MAML…YVSS.

It belongs to the SPCS1 family.

The protein localises to the endoplasmic reticulum membrane. Its function is as follows. Functions in tapetum development during early meiosis. May play a role in the endoplasmic reticulum (ER) membrane in the early stages of tapetum development in anthers. Seems to function after MSP1 and before UDT1. This Oryza sativa subsp. japonica (Rice) protein is Signal peptidase complex-like protein DTM1.